Here is a 78-residue protein sequence, read N- to C-terminus: Acyl carrier protein (78 aa).

The Carrier domain occupies 2–77; it reads STIEESVKSI…AAIDFIKESK (76 aa). Position 37 is an O-(pantetheine 4'-phosphoryl)serine (Ser37).

It belongs to the acyl carrier protein (ACP) family. Post-translationally, 4'-phosphopantetheine is transferred from CoA to a specific serine of apo-ACP by AcpS. This modification is essential for activity because fatty acids are bound in thioester linkage to the sulfhydryl of the prosthetic group.

The protein localises to the cytoplasm. It functions in the pathway lipid metabolism; fatty acid biosynthesis. In terms of biological role, carrier of the growing fatty acid chain in fatty acid biosynthesis. The chain is Acyl carrier protein from Wigglesworthia glossinidia brevipalpis.